The primary structure comprises 422 residues: Glutamate 2,3-aminomutase (422 aa).

The region spanning Arg150–Pro371 is the Radical SAM core domain. Cys164, Cys168, and Cys171 together coordinate [4Fe-4S] cluster. Lys376 bears the N6-(pyridoxal phosphate)lysine mark.

Belongs to the radical SAM superfamily. It depends on pyridoxal 5'-phosphate as a cofactor. The cofactor is [4Fe-4S] cluster.

It catalyses the reaction L-glutamate = 3-aminopentanedioate. Its function is as follows. Catalyzes the interconversion of L-glutamate and L-beta-glutamate. Does not have L-lysine 2,3-aminomutase activity. The chain is Glutamate 2,3-aminomutase (eam) from Clostridioides difficile (strain 630) (Peptoclostridium difficile).